The sequence spans 354 residues: Probable mannitol dehydrogenase 1 (354 aa).

7 residues coordinate Zn(2+): C43, H65, C96, C99, C102, C110, and C158.

Belongs to the zinc-containing alcohol dehydrogenase family. Requires Zn(2+) as cofactor.

It carries out the reaction D-mannitol + NAD(+) = D-mannose + NADH + H(+). Oxidizes mannitol to mannose. Provides the initial step by which translocated mannitol is committed to central metabolism and, by regulating mannitol pool size, is important in regulating salt tolerance at the cellular level. The chain is Probable mannitol dehydrogenase 1 (CAD1) from Stylosanthes humilis (Townsville stylo).